Consider the following 364-residue polypeptide: GTPase Obg (364 aa).

The 161-residue stretch at 1–161 folds into the Obg domain; sequence MRFVDEVTIS…KYLRLELKIL (161 aa). One can recognise an OBG-type G domain in the interval 162-334; that stretch reads ADAGIIGLPN…LVDAIWKLQS (173 aa). Residues 168–175, 193–197, 217–220, 287–290, and 315–317 each bind GTP; these read GLPNAGKS, FTTLN, DIPG, NKID, and SAE. The Mg(2+) site is built by S175 and T195.

This sequence belongs to the TRAFAC class OBG-HflX-like GTPase superfamily. OBG GTPase family. In terms of assembly, monomer. Requires Mg(2+) as cofactor.

It is found in the cytoplasm. In terms of biological role, an essential GTPase which binds GTP, GDP and possibly (p)ppGpp with moderate affinity, with high nucleotide exchange rates and a fairly low GTP hydrolysis rate. Plays a role in control of the cell cycle, stress response, ribosome biogenesis and in those bacteria that undergo differentiation, in morphogenesis control. The protein is GTPase Obg of Lawsonia intracellularis (strain PHE/MN1-00).